Reading from the N-terminus, the 227-residue chain is Cytochrome c oxidase subunit 2 (227 aa).

Over 1–14 (MAYPFQLGFQDATS) the chain is Mitochondrial intermembrane. A helical transmembrane segment spans residues 15-45 (PIMEELLHFHDHTLMIVFLISSLVLYIISLM). The Mitochondrial matrix portion of the chain corresponds to 46-59 (LTTKLTHTSTMDAQ). A helical membrane pass occupies residues 60–87 (EVETIWTILPAIILILIALPSLRILYMM). Residues 88–227 (DEINNPSLTV…HFEKWSASML (140 aa)) are Mitochondrial intermembrane-facing. Residues His161, Cys196, Glu198, Cys200, His204, and Met207 each contribute to the Cu cation site. Glu198 contacts Mg(2+).

This sequence belongs to the cytochrome c oxidase subunit 2 family. Component of the cytochrome c oxidase (complex IV, CIV), a multisubunit enzyme composed of 14 subunits. The complex is composed of a catalytic core of 3 subunits MT-CO1, MT-CO2 and MT-CO3, encoded in the mitochondrial DNA, and 11 supernumerary subunits COX4I, COX5A, COX5B, COX6A, COX6B, COX6C, COX7A, COX7B, COX7C, COX8 and NDUFA4, which are encoded in the nuclear genome. The complex exists as a monomer or a dimer and forms supercomplexes (SCs) in the inner mitochondrial membrane with NADH-ubiquinone oxidoreductase (complex I, CI) and ubiquinol-cytochrome c oxidoreductase (cytochrome b-c1 complex, complex III, CIII), resulting in different assemblies (supercomplex SCI(1)III(2)IV(1) and megacomplex MCI(2)III(2)IV(2)). Found in a complex with TMEM177, COA6, COX18, COX20, SCO1 and SCO2. Interacts with TMEM177 in a COX20-dependent manner. Interacts with COX20. Interacts with COX16. It depends on Cu cation as a cofactor.

The protein localises to the mitochondrion inner membrane. It catalyses the reaction 4 Fe(II)-[cytochrome c] + O2 + 8 H(+)(in) = 4 Fe(III)-[cytochrome c] + 2 H2O + 4 H(+)(out). Its function is as follows. Component of the cytochrome c oxidase, the last enzyme in the mitochondrial electron transport chain which drives oxidative phosphorylation. The respiratory chain contains 3 multisubunit complexes succinate dehydrogenase (complex II, CII), ubiquinol-cytochrome c oxidoreductase (cytochrome b-c1 complex, complex III, CIII) and cytochrome c oxidase (complex IV, CIV), that cooperate to transfer electrons derived from NADH and succinate to molecular oxygen, creating an electrochemical gradient over the inner membrane that drives transmembrane transport and the ATP synthase. Cytochrome c oxidase is the component of the respiratory chain that catalyzes the reduction of oxygen to water. Electrons originating from reduced cytochrome c in the intermembrane space (IMS) are transferred via the dinuclear copper A center (CU(A)) of subunit 2 and heme A of subunit 1 to the active site in subunit 1, a binuclear center (BNC) formed by heme A3 and copper B (CU(B)). The BNC reduces molecular oxygen to 2 water molecules using 4 electrons from cytochrome c in the IMS and 4 protons from the mitochondrial matrix. This chain is Cytochrome c oxidase subunit 2 (MT-CO2), found in Ceratotherium simum (White rhinoceros).